The chain runs to 332 residues: Ketol-acid reductoisomerase (NADP(+)) (332 aa).

Positions 2-182 constitute a KARI N-terminal Rossmann domain; the sequence is AKVYHDTEVS…GATRAGVLET (181 aa). Residues 25–28, arginine 48, serine 53, and 83–86 contribute to the NADP(+) site; these read YGSQ and DTEQ. Histidine 108 is a catalytic residue. Residue glycine 134 participates in NADP(+) binding. The KARI C-terminal knotted domain maps to 183–328; sequence TFKEETETDL…KVLREMMPWL (146 aa). The Mg(2+) site is built by aspartate 191, glutamate 195, glutamate 227, and glutamate 231. Serine 252 is a substrate binding site.

The protein belongs to the ketol-acid reductoisomerase family. It depends on Mg(2+) as a cofactor.

The enzyme catalyses (2R)-2,3-dihydroxy-3-methylbutanoate + NADP(+) = (2S)-2-acetolactate + NADPH + H(+). It carries out the reaction (2R,3R)-2,3-dihydroxy-3-methylpentanoate + NADP(+) = (S)-2-ethyl-2-hydroxy-3-oxobutanoate + NADPH + H(+). Its pathway is amino-acid biosynthesis; L-isoleucine biosynthesis; L-isoleucine from 2-oxobutanoate: step 2/4. It participates in amino-acid biosynthesis; L-valine biosynthesis; L-valine from pyruvate: step 2/4. Involved in the biosynthesis of branched-chain amino acids (BCAA). Catalyzes an alkyl-migration followed by a ketol-acid reduction of (S)-2-acetolactate (S2AL) to yield (R)-2,3-dihydroxy-isovalerate. In the isomerase reaction, S2AL is rearranged via a Mg-dependent methyl migration to produce 3-hydroxy-3-methyl-2-ketobutyrate (HMKB). In the reductase reaction, this 2-ketoacid undergoes a metal-dependent reduction by NADPH to yield (R)-2,3-dihydroxy-isovalerate. This Dictyoglomus turgidum (strain DSM 6724 / Z-1310) protein is Ketol-acid reductoisomerase (NADP(+)).